The chain runs to 207 residues: Putative 3-methyladenine DNA glycosylase (207 aa).

The segment covering 182 to 193 has biased composition (low complexity); that stretch reads PAPAGARAARAP. Residues 182-207 are disordered; it reads PAPAGARAARAPAPAPRPRRPRGSGP. The segment covering 198–207 has biased composition (basic residues); the sequence is RPRRPRGSGP.

The protein belongs to the DNA glycosylase MPG family.

The polypeptide is Putative 3-methyladenine DNA glycosylase (Anaeromyxobacter dehalogenans (strain 2CP-C)).